The primary structure comprises 97 residues: Large ribosomal subunit protein uL23 (97 aa).

The protein belongs to the universal ribosomal protein uL23 family. In terms of assembly, part of the 50S ribosomal subunit. Contacts protein L29, and trigger factor when it is bound to the ribosome.

Its function is as follows. One of the early assembly proteins it binds 23S rRNA. One of the proteins that surrounds the polypeptide exit tunnel on the outside of the ribosome. Forms the main docking site for trigger factor binding to the ribosome. This chain is Large ribosomal subunit protein uL23, found in Pelagibacter ubique (strain HTCC1062).